An 864-amino-acid chain; its full sequence is DNA mismatch repair protein MutS (864 aa).

Glycine 607–serine 614 is a binding site for ATP.

It belongs to the DNA mismatch repair MutS family.

This protein is involved in the repair of mismatches in DNA. It is possible that it carries out the mismatch recognition step. This protein has a weak ATPase activity. The protein is DNA mismatch repair protein MutS of Neisseria gonorrhoeae (strain NCCP11945).